Consider the following 885-residue polypeptide: DNA replication licensing factor REC (885 aa).

The interval 36–76 is disordered; it reads RVIPAGGNRQPNQGEPGAPDAPSVPPATRQPRGWSRTAGKR. A C4-type zinc finger spans residues 281–308; it reads CSRCQMEIAMRQRGTFQPRPYQCKRSEC. The region spanning 430 to 627 is the MCM domain; sequence SFKLLVQSIA…ERDMSLTAHV (198 aa). ATP is bound at residue 473-480; sequence GDPGIGKT. Over residues 796-805 the composition is skewed to polar residues; it reads SLKEGSSRQG. The tract at residues 796–818 is disordered; sequence SLKEGSSRQGTRGGGGAGGGAGK. Residues 806-817 are compositionally biased toward gly residues; the sequence is TRGGGGAGGGAG.

Belongs to the MCM family.

It localises to the nucleus. Functionally, required for meiotic DNA recombination in females. Probably not involved in DNA repair and recombination in somatic cells. This Drosophila melanogaster (Fruit fly) protein is DNA replication licensing factor REC (rec).